An 857-amino-acid chain; its full sequence is Dimethylglycine dehydrogenase, mitochondrial (857 aa).

A mitochondrion-targeting transit peptide spans 1-43; that stretch reads MLRLGALRLRGLALRSSQGRPSSAGLREGQESPPSPPEWKDRA. Residues 15–39 form a disordered region; that stretch reads RSSQGRPSSAGLREGQESPPSPPEW. FAD is bound by residues 52–53, 73–74, and 80–88; these read CV, EK, and GSTWHAAGL. H84 carries the post-translational modification Tele-8alpha-FAD histidine. Residue K107 is modified to N6-acetyllysine. K141 bears the N6-acetyllysine; alternate mark. K141 is modified (N6-succinyllysine; alternate). Position 161 is an N6-acetyllysine (K161). V212 is a binding site for FAD. Residue K216 is modified to N6-acetyllysine. W244 is a binding site for FAD. Residues K310 and K312 each carry the N6-succinyllysine modification. Residues K328 and K353 each carry the N6-acetyllysine modification. 390–395 is an FAD binding site; sequence FGYGII. Residues K427, K469, and K516 each carry the N6-acetyllysine; alternate modification. Residues K427, K469, and K516 each carry the N6-succinyllysine; alternate modification. (6S)-5,6,7,8-tetrahydrofolate is bound at residue 573 to 575; the sequence is ELT. K648 is subject to N6-acetyllysine; alternate. At K648 the chain carries N6-succinyllysine; alternate. (6S)-5,6,7,8-tetrahydrofolate-binding positions include Y669, 676-678, and Y737; that span reads ELY. K757 is subject to N6-acetyllysine. K786 is subject to N6-acetyllysine; alternate. Position 786 is an N6-succinyllysine; alternate (K786). Position 788 is an N6-succinyllysine (K788).

The protein belongs to the GcvT family. Requires FAD as cofactor.

It is found in the mitochondrion. The catalysed reaction is (6S)-5,6,7,8-tetrahydrofolyl-(gamma-L-Glu)(n) + N,N-dimethylglycine + oxidized [electron-transfer flavoprotein] + H(+) = (6R)-5,10-methylenetetrahydrofolyl-(gamma-L-Glu)(n) + sarcosine + reduced [electron-transfer flavoprotein]. The protein operates within amine and polyamine degradation; betaine degradation; sarcosine from betaine: step 2/2. In terms of biological role, catalyzes the demethylation of N,N-dimethylglycine to sarcosine. Also has activity with sarcosine in vitro. This Rattus norvegicus (Rat) protein is Dimethylglycine dehydrogenase, mitochondrial (Dmgdh).